The primary structure comprises 221 residues: NAD(P)H-hydrate epimerase (221 aa).

Positions 10–211 (MQQYDQYTIN…DIGIYSPAEL (202 aa)) constitute a YjeF N-terminal domain. 58–62 (NNGGD) is a (6S)-NADPHX binding site. Residues Asn-59 and Asp-121 each coordinate K(+). (6S)-NADPHX is bound by residues 125-131 (GIGLSKP) and Asp-154. K(+) is bound at residue Ser-157.

Belongs to the NnrE/AIBP family. It depends on K(+) as a cofactor.

The catalysed reaction is (6R)-NADHX = (6S)-NADHX. It catalyses the reaction (6R)-NADPHX = (6S)-NADPHX. Functionally, catalyzes the epimerization of the S- and R-forms of NAD(P)HX, a damaged form of NAD(P)H that is a result of enzymatic or heat-dependent hydration. This is a prerequisite for the S-specific NAD(P)H-hydrate dehydratase to allow the repair of both epimers of NAD(P)HX. The protein is NAD(P)H-hydrate epimerase of Weissella koreensis (strain KACC 15510).